The sequence spans 620 residues: UDP-glucose:protein N-beta-glucosyltransferase (620 aa).

This sequence belongs to the glycosyltransferase 41 family.

The protein localises to the cytoplasm. The enzyme catalyses L-asparaginyl-[protein] + UDP-alpha-D-glucose = N(4)-(beta-D-glucosyl)-L-asparaginyl-[protein] + UDP + H(+). It functions in the pathway protein modification; protein glycosylation. Its function is as follows. Inverting glycosyltransferase that catalyzes the transfer of one glucose moiety from UDP-glucose to an asparagine residue in peptides and proteins containing the NX(S/T) motif, resulting in their modification with a beta-linked 1,N-glucose. Likely acts as a key component of a general protein glycosylation system. This chain is UDP-glucose:protein N-beta-glucosyltransferase, found in Actinobacillus pleuropneumoniae serotype 5b (strain L20).